We begin with the raw amino-acid sequence, 286 residues long: Puff II/9-1 protein (286 aa).

Positions 1–19 (MKQFIVLTVVLLAIQELQG) are cleaved as a signal peptide. The interval 61 to 235 (ITAIKKDNDF…ENALNTLRCE (175 aa)) is helical. The N-linked (GlcNAc...) asparagine glycan is linked to N156.

This chain is Puff II/9-1 protein (II/9-1), found in Bradysia coprophila (Dark-winged fungus gnat).